The following is a 455-amino-acid chain: C4-dicarboxylate transport protein (455 aa).

The next 8 helical transmembrane spans lie at 20–40 (HLYF…HFYP), 59–79 (MIIA…MGTL), 91–111 (GYFL…ANVI), 160–180 (GNIL…ILIG), 209–229 (PIGA…ASVV), 231–251 (LATL…VVLG), 344–364 (LLLV…AGFI), and 367–387 (AATL…ILGV).

Belongs to the dicarboxylate/amino acid:cation symporter (DAACS) (TC 2.A.23) family.

The protein resides in the cell inner membrane. Functionally, responsible for the transport of dicarboxylates such as succinate, fumarate, and malate from the periplasm across the membrane. The polypeptide is C4-dicarboxylate transport protein (Paracoccus denitrificans (strain Pd 1222)).